A 384-amino-acid chain; its full sequence is MINNRSVIIGIVVGENSGDILGVGLIRSLKKCFKKVQFFGIGGFRMRSENMECWYDISELSIMGITGVIFRLPKLLNMRRELIKRFLKLKLNIFIGIDFPDFNISLEKRLKKYGITTIHYVSPSIWAWRSNRVFALKEATHNVLLLFPFEKSIYARCGIPNQFIGHPLADEIPLYPNKIALRQKFDIPSNRCCLAILPGSRPKEIQILTKIFMHCAKLLQDTIPNLEILIPLHDTDLINQFVTLTSFISVKFRVLHTLTAWEVMAAADAALLTSGTATLECMLAKCPMVVAYRMNPVIFMLIRHLIKVKWISLPNLLAGKPIVQEFIQKKCDPQRLASSLFYLLNYNQEQRTTLQQEFYHLHRSIKLHANDQATRLILKYINLL.

The protein belongs to the LpxB family.

The catalysed reaction is 2-N,3-O-bis[(3R)-3-hydroxytetradecanoyl]-alpha-D-glucosaminyl 1-phosphate + UDP-2-N,3-O-bis[(3R)-3-hydroxytetradecanoyl]-alpha-D-glucosamine = lipid A disaccharide (E. coli) + UDP + H(+). It carries out the reaction a lipid X + a UDP-2-N,3-O-bis[(3R)-3-hydroxyacyl]-alpha-D-glucosamine = a lipid A disaccharide + UDP + H(+). It participates in glycolipid biosynthesis; lipid IV(A) biosynthesis; lipid IV(A) from (3R)-3-hydroxytetradecanoyl-[acyl-carrier-protein] and UDP-N-acetyl-alpha-D-glucosamine: step 5/6. In terms of biological role, condensation of UDP-2,3-diacylglucosamine and 2,3-diacylglucosamine-1-phosphate to form lipid A disaccharide, a precursor of lipid A, a phosphorylated glycolipid that anchors the lipopolysaccharide to the outer membrane of the cell. This chain is Lipid-A-disaccharide synthase, found in Blochmanniella floridana.